A 152-amino-acid chain; its full sequence is Dynein light chain Tctex-type protein 2B (152 aa).

Belongs to the dynein light chain Tctex-type family. In terms of assembly, light chain of the cytoplasmic dynein complex 2, a multisubunit complex composed at least of eleven different proteins. The cytoplasmic dynein 2 complex consists of two catalytic heavy chains (HCs) and a number of non-catalytic subunits presented by intermediate chains (ICs), light intermediate chains (LICs) and light chains (LCs). Among them, a heavy chain (DYNC2H1), two intermediate chains (DYNC2I2 and DYNC2I1), a light intermediate chain (DYNC2LI1), and a light chain (DYNLT2B) are unique to the dynein-2 complex, but a subset of the light chains are also shared by dynein-1 and dynein-2 complexes. The dimer DYNLT2B-DYNLT1/DYNLT3 interacts with DYNC2I1; this interaction is crucial for retrograde trafficking of ciliary proteins.

It localises to the dynein axonemal particle. In terms of biological role, acts as one of several non-catalytic accessory components of the cytoplasmic dynein 2 complex (dynein-2 complex), a motor protein complex that drives the movement of cargos along microtubules within cilia and flagella in concert with the intraflagellar transport (IFT) system. Required for proper retrograde ciliary transport. The polypeptide is Dynein light chain Tctex-type protein 2B (DYNLT2B) (Bos taurus (Bovine)).